A 250-amino-acid polypeptide reads, in one-letter code: 5-oxoprolinase subunit A (250 aa).

It belongs to the LamB/PxpA family. Forms a complex composed of PxpA, PxpB and PxpC.

It catalyses the reaction 5-oxo-L-proline + ATP + 2 H2O = L-glutamate + ADP + phosphate + H(+). Its function is as follows. Catalyzes the cleavage of 5-oxoproline to form L-glutamate coupled to the hydrolysis of ATP to ADP and inorganic phosphate. In Staphylococcus aureus (strain MW2), this protein is 5-oxoprolinase subunit A.